The chain runs to 876 residues: Alanine--tRNA ligase (876 aa).

Zn(2+) is bound by residues H565, H569, C667, and H671.

The protein belongs to the class-II aminoacyl-tRNA synthetase family. It depends on Zn(2+) as a cofactor.

The protein localises to the cytoplasm. The enzyme catalyses tRNA(Ala) + L-alanine + ATP = L-alanyl-tRNA(Ala) + AMP + diphosphate. Its function is as follows. Catalyzes the attachment of alanine to tRNA(Ala) in a two-step reaction: alanine is first activated by ATP to form Ala-AMP and then transferred to the acceptor end of tRNA(Ala). Also edits incorrectly charged Ser-tRNA(Ala) and Gly-tRNA(Ala) via its editing domain. This Staphylococcus aureus (strain MRSA252) protein is Alanine--tRNA ligase.